The primary structure comprises 345 residues: Tyrosine-binding protein (345 aa).

The N-terminal stretch at 1 to 23 (MIKSKKILSLIIAGVLGVSMLTG) is a signal peptide. Cys24 is lipidated: N-palmitoyl cysteine. A lipid anchor (S-diacylglycerol cysteine) is attached at Cys24.

In terms of assembly, the complex is probably composed of two ATP-binding proteins (CDR20291_0806), two transmembrane proteins (CDR20291_0807) and a solute-binding protein (CDR20291_0805).

Its subcellular location is the cell membrane. Its function is as follows. Probably part of an ABC transporter complex involved in tyrosine uptake. May also import phenylalanine. The polypeptide is Tyrosine-binding protein (Clostridioides difficile (strain R20291) (Peptoclostridium difficile)).